The sequence spans 86 residues: RNA-binding protein Hfq (86 aa).

The Sm domain occupies 12–73 (DIFLNQVRKE…ISTISPQKPV (62 aa)).

The protein belongs to the Hfq family. Homohexamer.

Its function is as follows. RNA chaperone that binds small regulatory RNA (sRNAs) and mRNAs to facilitate mRNA translational regulation in response to envelope stress, environmental stress and changes in metabolite concentrations. Also binds with high specificity to tRNAs. The sequence is that of RNA-binding protein Hfq from Caldanaerobacter subterraneus subsp. tengcongensis (strain DSM 15242 / JCM 11007 / NBRC 100824 / MB4) (Thermoanaerobacter tengcongensis).